Consider the following 182-residue polypeptide: Methyl-coenzyme M reductase operon protein C (182 aa).

In terms of assembly, MCR is composed of three subunits: alpha, beta, and gamma. The function of proteins C and D is not known.

The sequence is that of Methyl-coenzyme M reductase operon protein C (mcrC) from Methanococcus voltae.